The chain runs to 181 residues: Probable pyruvoyl-dependent arginine decarboxylase (181 aa).

At serine 43 the chain carries Pyruvic acid (Ser).

It belongs to the PdaD family. The cofactor is pyruvate.

The enzyme catalyses L-arginine + H(+) = agmatine + CO2. This is Probable pyruvoyl-dependent arginine decarboxylase from Chlorobium phaeovibrioides (strain DSM 265 / 1930) (Prosthecochloris vibrioformis (strain DSM 265)).